We begin with the raw amino-acid sequence, 222 residues long: Protein GrpE (222 aa).

Disordered stretches follow at residues methionine 1 to glutamine 21 and lysine 200 to alanine 222.

It belongs to the GrpE family. Homodimer.

It localises to the cytoplasm. In terms of biological role, participates actively in the response to hyperosmotic and heat shock by preventing the aggregation of stress-denatured proteins, in association with DnaK and GrpE. It is the nucleotide exchange factor for DnaK and may function as a thermosensor. Unfolded proteins bind initially to DnaJ; upon interaction with the DnaJ-bound protein, DnaK hydrolyzes its bound ATP, resulting in the formation of a stable complex. GrpE releases ADP from DnaK; ATP binding to DnaK triggers the release of the substrate protein, thus completing the reaction cycle. Several rounds of ATP-dependent interactions between DnaJ, DnaK and GrpE are required for fully efficient folding. This Chelativorans sp. (strain BNC1) protein is Protein GrpE.